Consider the following 485-residue polypeptide: Inosine-5'-monophosphate dehydrogenase (485 aa).

CBS domains follow at residues 97–154 and 155–211; these read IIRD…VSDV and MVRD…PDAS. NAD(+) is bound by residues Asp-246 and 295-297; that span reads GIG. 2 residues coordinate K(+): Gly-297 and Gly-299. Residue Ser-300 participates in IMP binding. Cys-302 is a binding site for K(+). Cys-302 functions as the Thioimidate intermediate in the catalytic mechanism. IMP is bound by residues 335–337, 358–359, and 382–386; these read DGG, GS, and YRGMG. Arg-398 serves as the catalytic Proton acceptor. Glu-409 provides a ligand contact to IMP. Positions 463, 464, and 465 each coordinate K(+).

It belongs to the IMPDH/GMPR family. In terms of assembly, homotetramer. It depends on K(+) as a cofactor.

The enzyme catalyses IMP + NAD(+) + H2O = XMP + NADH + H(+). The protein operates within purine metabolism; XMP biosynthesis via de novo pathway; XMP from IMP: step 1/1. Its activity is regulated as follows. Mycophenolic acid (MPA) is a non-competitive inhibitor that prevents formation of the closed enzyme conformation by binding to the same site as the amobile flap. In contrast, mizoribine monophosphate (MZP) is a competitive inhibitor that induces the closed conformation. MPA is a potent inhibitor of mammalian IMPDHs but a poor inhibitor of the bacterial enzymes. MZP is a more potent inhibitor of bacterial IMPDH. Functionally, catalyzes the conversion of inosine 5'-phosphate (IMP) to xanthosine 5'-phosphate (XMP), the first committed and rate-limiting step in the de novo synthesis of guanine nucleotides, and therefore plays an important role in the regulation of cell growth. The polypeptide is Inosine-5'-monophosphate dehydrogenase (Thermoplasma acidophilum (strain ATCC 25905 / DSM 1728 / JCM 9062 / NBRC 15155 / AMRC-C165)).